The chain runs to 148 residues: MADILQMHDLKPAPGANKDRIRVGRGEGSKGKTSGRGDKGTKKRYQVRPGFEGGQLPLYMRLPKLRGFKNPFKKEYQVVNVAVLAELFPQGGEITVADLVAKGAVRNGFPVKVLGDGEVSAAYTLKGVKASASAKSKIEAAGGSISED.

The span at 1 to 40 shows a compositional bias: basic and acidic residues; that stretch reads MADILQMHDLKPAPGANKDRIRVGRGEGSKGKTSGRGDKG. The interval 1–47 is disordered; sequence MADILQMHDLKPAPGANKDRIRVGRGEGSKGKTSGRGDKGTKKRYQV.

The protein belongs to the universal ribosomal protein uL15 family. As to quaternary structure, part of the 50S ribosomal subunit.

Binds to the 23S rRNA. This Bifidobacterium adolescentis (strain ATCC 15703 / DSM 20083 / NCTC 11814 / E194a) protein is Large ribosomal subunit protein uL15.